Here is a 199-residue protein sequence, read N- to C-terminus: Charged multivesicular body protein 1b (199 aa).

Coiled coils occupy residues 10–48 and 178–199; these read NLKF…MEVA and TSVA…RDQV. Residues 167–199 form a disordered region; the sequence is ELPQGQTGSVGTSVASAEQDELSQRLARLRDQV. The span at 170–182 shows a compositional bias: polar residues; it reads QGQTGSVGTSVAS. The MIT-interacting motif signature appears at 186 to 196; sequence DELSQRLARLR.

The protein belongs to the SNF7 family. As to quaternary structure, probable peripherally associated component of the endosomal sorting required for transport complex III (ESCRT-III).

It localises to the cytoplasm. Its subcellular location is the cytosol. The protein localises to the endosome. It is found in the late endosome membrane. Its function is as follows. Probable peripherally associated component of the endosomal sorting required for transport complex III (ESCRT-III) which is involved in multivesicular bodies (MVBs) formation and sorting of endosomal cargo proteins into MVBs. MVBs contain intraluminal vesicles (ILVs) that are generated by invagination and scission from the limiting membrane of the endosome and mostly are delivered to lysosomes enabling degradation of membrane proteins, such as stimulated growth factor receptors, lysosomal enzymes and lipids. The polypeptide is Charged multivesicular body protein 1b (CHMP1B) (Gallus gallus (Chicken)).